Reading from the N-terminus, the 1958-residue chain is Sodium channel protein type 10 subunit alpha (1958 aa).

Topologically, residues 1-125 (MEFPFGSVGT…FNLIRRTAIK (125 aa)) are cytoplasmic. Residues 27-54 (QIAAHRAAKKGRPKQRGQKDKSEKPRPQ) form a disordered region. Residues 32-42 (RAAKKGRPKQR) are compositionally biased toward basic residues. Positions 43-54 (GQKDKSEKPRPQ) are enriched in basic and acidic residues. Residues 116-404 (FNLIRRTAIK…VTMAYEEQSQ (289 aa)) form an I repeat. Residues 126–149 (VSVHSWFSIFITVTILVNCVCMTR) traverse the membrane as a helical segment. Topologically, residues 150–154 (TDLPE) are extracellular. A helical membrane pass occupies residues 155–174 (KLEYAFTVVYTFEALIKILA). Topologically, residues 175–187 (RGFCLNEFTYLRD) are cytoplasmic. Residues 188–206 (PWNWLDFSVITLAYVGAAI) form a helical membrane-spanning segment. Residues 207 to 212 (DLRGIS) are Extracellular-facing. Residues 213-232 (GLRTFRVLRALKTVSVIPGL) form a helical; Voltage-sensor membrane-spanning segment. Over 233–248 (KVIVGALIHSVRKLAD) the chain is Cytoplasmic. Residues 249-272 (VTILTVFCLSVFALVGLQLFKGNL) traverse the membrane as a helical segment. Residues 273–340 (KNKCIKNGTD…PDFNYTSFDS (68 aa)) are Extracellular-facing. Cys276 and Cys318 are oxidised to a cystine. 4 N-linked (GlcNAc...) asparagine glycosylation sites follow: Asn279, Asn288, Asn311, and Asn334. Residues 341–365 (FAWAFLSLFRLMTQDSWERLYQQTL) constitute an intramembrane region (pore-forming). The Extracellular segment spans residues 366–372 (RASGKMY). The helical transmembrane segment at 373 to 398 (MVFFVLVIFLGSFYLVNLILAVVTMA) threads the bilayer. The Cytoplasmic portion of the chain corresponds to 399–658 (YEEQSQATIA…KWKKFKMVLF (260 aa)). A phosphoserine mark is found at Ser440, Ser443, Ser466, and Ser478. Disordered stretches follow at residues 444–483 (HNGS…PYNQ) and 539–583 (GRGA…APEG). The span at 549-560 (PRSPLPQSPNPG) shows a compositional bias: pro residues. A phosphoserine mark is found at Ser611 and Ser614. The II repeat unit spans residues 646-910 (CCPKWKKFKM…EDDGEVNNLQ (265 aa)). Residues 659-683 (ELVTDPFAELTITLCIVVNTVFMAM) traverse the membrane as a helical segment. Topologically, residues 684-694 (EHYPMTDAFDA) are extracellular. A helical transmembrane segment spans residues 695-718 (MLQAGNIVFTVFFTMEMAFKIIAF). Topologically, residues 719–726 (DPYYYFQK) are cytoplasmic. The chain crosses the membrane as a helical span at residues 727-746 (KWNIFDCVIVTVSLLELSTS). Residues 747–752 (KKGSLS) are Extracellular-facing. The helical; Voltage-sensor transmembrane segment at 753–772 (VLRTFRLLRVFKLAKSWPTL) threads the bilayer. The Cytoplasmic portion of the chain corresponds to 773–788 (NMLIKIIGNSVGALGN). The chain crosses the membrane as a helical span at residues 789–809 (LTFILAIIVFIFALVGKQLLS). Residues 810–833 (ENYGCRRDGISVWNGERLRWHMCD) lie on the Extracellular side of the membrane. An intramembrane region (pore-forming) is located at residues 834 to 854 (FFHSFLVVFRILCGEWIENMW). At 855–863 (VCMEVSQDY) the chain is on the extracellular side. Cys856 and Cys865 form a disulfide bridge. The chain crosses the membrane as a helical span at residues 864 to 889 (ICLTLFLTVMVLGNLVVLNLFIALLL). At 890-1148 (NSFSADNLTA…GWQVRKTCYR (259 aa)) the chain is on the cytoplasmic side. The disordered stretch occupies residues 1006 to 1094 (DLDELEEDVE…SEGSTVDCPD (89 aa)). The span at 1017-1038 (ASQSSWQEESPKGQQELLQQVQ) shows a compositional bias: polar residues. The III repeat unit spans residues 1141 to 1450 (QVRKTCYRIV…KKYYNAMKKL (310 aa)). Residues 1149–1172 (IVEHSWFESFIIFMILLSSGALAF) traverse the membrane as a helical segment. Residues 1173–1185 (EDNYLEEKPRVKS) lie on the Extracellular side of the membrane. A helical transmembrane segment spans residues 1186 to 1211 (VLEYTDRVFTFIFVFEMLLKWVAYGF). Over 1212 to 1217 (KKYFTN) the chain is Cytoplasmic. The chain crosses the membrane as a helical span at residues 1218–1239 (AWCWLDFLIVNISLTSLIAKIL). At 1240–1243 (EYSD) the chain is on the extracellular side. The helical; Voltage-sensor transmembrane segment at 1244 to 1265 (VASIKALRTLRALRPLRALSRF) threads the bilayer. At 1266–1284 (EGMRVVVDALVGAIPSIMN) the chain is on the cytoplasmic side. The helical transmembrane segment at 1285-1312 (VLLVCLIFWLIFSIMGVNLFAGKFSRCV) threads the bilayer. The Extracellular segment spans residues 1313 to 1354 (DTRSNPFSVVNSTFVTNKSDCYNQNNTGHFFWVNVKVNFDNV). N-linked (GlcNAc...) asparagine glycans are attached at residues Asn1323, Asn1329, and Asn1337. The segment at residues 1355–1376 (AMGYLALLQVATFKGWMDIMYA) is an intramembrane region (pore-forming). Over 1377-1392 (AVDSRDINSQPNWEES) the chain is Extracellular. Residues 1393–1419 (LYMYLYFVVFIIFGGFFTLNLFVGVII) traverse the membrane as a helical segment. The Cytoplasmic portion of the chain corresponds to 1420–1472 (DNFNQQKKKLGGQDIFMTEEQKKYYNAMKKLGSKKPQKPIPRPLNKYQGFVFD). Ser1452 is subject to Phosphoserine; by PKC. The IV repeat unit spans residues 1459 to 1758 (IPRPLNKYQG…WEKFDPEATQ (300 aa)). The helical transmembrane segment at 1473 to 1496 (IVTRQAFDIIIMALICLNMITMMV) threads the bilayer. At 1497 to 1507 (ETDNQSEEKTK) the chain is on the extracellular side. The N-linked (GlcNAc...) asparagine glycan is linked to Asn1500. Residues 1508–1531 (VLGRINQFFVAVFTGECVMKMFAL) form a helical membrane-spanning segment. At 1532–1537 (RQYYFT) the chain is on the cytoplasmic side. Residues 1538 to 1561 (NGWNVFDFIVVILSISSLLFSAIL) traverse the membrane as a helical segment. Over 1562–1573 (SSLESYFSPTLL) the chain is Extracellular. The chain crosses the membrane as a helical; Voltage-sensor span at residues 1574-1595 (RVIRLARIGRILRLIRAAKGIR). Residues 1596–1610 (TLLFALMMSLPALFN) lie on the Cytoplasmic side of the membrane. A helical transmembrane segment spans residues 1611-1633 (IGLLLFLVMFIYSIFGMASFANV). The Extracellular portion of the chain corresponds to 1634-1647 (IDEAGIDDMFNFKT). Residues 1648-1670 (FGNSMLCLFQITTSAGWDGLLSP) constitute an intramembrane region (pore-forming). Residues 1671-1698 (ILNTGPPYCDPNRPNSNGSKGNCGSPAV) lie on the Extracellular side of the membrane. An N-linked (GlcNAc...) asparagine glycan is attached at Asn1687. Residues 1699–1723 (GILFFTTYIIISFLIVVNMYIAVIL) traverse the membrane as a helical segment. At 1724–1958 (ENFNVATEES…AKEGKSPGPQ (235 aa)) the chain is on the cytoplasmic side. In terms of domain architecture, IQ spans 1852-1881 (EDISATIIQKAYRNYMLQRSLMLSNPLHVP). The segment at 1901-1958 (NDNGGLPDKSETASATSFPPSYDSVTRGLSDRANISTSSSMQNEDEVTAKEGKSPGPQ) is disordered. Residues 1933-1942 (ANISTSSSMQ) show a composition bias toward polar residues. The span at 1947-1958 (VTAKEGKSPGPQ) shows a compositional bias: basic and acidic residues.

Belongs to the sodium channel (TC 1.A.1.10) family. Nav1.8/SCN10A subfamily. The channel consists of an ion conducting pore forming alpha-subunit regulated by one or more associated auxiliary subunits SCN1B, SCN2B and SCN3B; electrophysiological properties may vary depending on the type of the associated beta subunits. Found in a number of complexes with PRX, DYNLT1 and PDZD2. Interacts with proteins such as FSTL1, PRX, DYNLT1, PDZD2, S100A10 and many others. Interacts with NEDD4 and NEDD4L. In terms of processing, ubiquitinated by NEDD4L; which promotes its endocytosis. Post-translationally, phosphorylation at Ser-1452 by PKC in a highly conserved cytoplasmic loop slows inactivation of the sodium channel and reduces peak sodium currents. Lacks the cysteine which covalently binds the conotoxin GVIIJ. This cysteine (position 815) is speculated in other sodium channel subunits alpha to be implied in covalent binding with the sodium channel subunit beta-2 or beta-4. Expressed in dorsal root ganglion and trigeminal ganglion.

The protein resides in the cell membrane. It catalyses the reaction Na(+)(in) = Na(+)(out). Functionally, tetrodotoxin-resistant channel that mediates the voltage-dependent sodium ion permeability of excitable membranes. Assuming opened or closed conformations in response to the voltage difference across the membrane, the protein forms a sodium-selective channel through which sodium ions may pass in accordance with their electrochemical gradient. Plays a role in neuropathic pain mechanisms. The polypeptide is Sodium channel protein type 10 subunit alpha (Mus musculus (Mouse)).